A 426-amino-acid chain; its full sequence is Serine--tRNA ligase (426 aa).

T230–E232 lines the L-serine pocket. R261–E263 provides a ligand contact to ATP. E284 contacts L-serine. An ATP-binding site is contributed by E348–S351. An L-serine-binding site is contributed by S384.

It belongs to the class-II aminoacyl-tRNA synthetase family. Type-1 seryl-tRNA synthetase subfamily. As to quaternary structure, homodimer. The tRNA molecule binds across the dimer.

It localises to the cytoplasm. The enzyme catalyses tRNA(Ser) + L-serine + ATP = L-seryl-tRNA(Ser) + AMP + diphosphate + H(+). It carries out the reaction tRNA(Sec) + L-serine + ATP = L-seryl-tRNA(Sec) + AMP + diphosphate + H(+). It participates in aminoacyl-tRNA biosynthesis; selenocysteinyl-tRNA(Sec) biosynthesis; L-seryl-tRNA(Sec) from L-serine and tRNA(Sec): step 1/1. In terms of biological role, catalyzes the attachment of serine to tRNA(Ser). Is also able to aminoacylate tRNA(Sec) with serine, to form the misacylated tRNA L-seryl-tRNA(Sec), which will be further converted into selenocysteinyl-tRNA(Sec). The polypeptide is Serine--tRNA ligase (Sphingopyxis alaskensis (strain DSM 13593 / LMG 18877 / RB2256) (Sphingomonas alaskensis)).